The following is a 139-amino-acid chain: Non-structural protein 1 (139 aa).

The DLNP; interaction with MAP1B motif lies at 136-139 (DLNS).

This sequence belongs to the pneumovirus non-structural protein 1 family. Monomer. Homomultimer. Heteromultimer with NS2. Interacts with the matrix protein M. Interacts with host ELOC and CUL2; this interaction allows NS1 to form an active E3 ligase with ELOC and CUL2. Interacts with host IRF3; this interaction leads to the disrupted association of IRF3 with CREBBP and thus reduced binding of IRF3 to the IFN-beta promoter. Interacts with host MAVS; this interaction prevents MAVS binding to RIGI and inhibits signaling pathway leading to interferon production. Interacts with host MAP1B/microtubule-associated protein 1B. Interacts with host TRIM25 (via SPRY domain); this interaction suppresses RIGI ubiquitination and results in decreased interaction between RIGI and MAVS.

It is found in the host cytoplasm. The protein localises to the host mitochondrion. The protein resides in the host nucleus. Its function is as follows. Plays a major role in antagonizing the type I IFN-mediated antiviral response by degrading or inhibiting multiple cellular factors required for either IFN induction or response pathways. Acts cooperatively with NS2 to repress activation and nuclear translocation of host IFN-regulatory factor IRF3. Also disrupts the association of IRF3 with CREBBP. Interacts with host mitochondrial-associated membrane (MAM) MAVS and prevents the interaction with RIGI. Interacts with TRIM25 to suppress TRIM25-mediated RIGI ubiquitination and thereby RIGI-MAVS interaction. Together with NS2, participates in the proteasomal degradation of host STAT2, IRF3, IRF7, TBK1 and RIGI through a NS-degradasome involving CUL2 and Elongin-C. The degradasome requires an intact mitochondrial MAVS. Decreases the levels of host TRAF3 and IKBKE/IKK-epsilon. As functions other than disruptions of the type I IFN-mediated antiviral signaling pathways, induces host SOCS1 and SOCS3 expression. Suppresses premature apoptosis by an NF-kappa-B-dependent, interferon-independent mechanism and thus facilitates virus growth. Additionally, NS1 may serve some inhibitory role in viral transcription and RNA replication. Suppresses proliferation and activation of host CD103+ CD8+ cytotoxic T-lymphocytes and Th17 helper T-lymphocytes. In Human respiratory syncytial virus B (strain 18537), this protein is Non-structural protein 1 (1C).